Consider the following 51-residue polypeptide: Kunitz-like toxin PcKuz3 (51 aa).

Intrachain disulfides connect Cys1/Cys51, Cys10/Cys34, and Cys26/Cys47.

It belongs to the venom Kunitz-type family. Sea anemone type 2 potassium channel toxin subfamily.

Its subcellular location is the secreted. It is found in the nematocyst. Functionally, potent toxin and weak serine protease inhibitor that displays activity on both trypsin and elastase. May act as a neurotoxin by blocking voltage-gated potassium channels (Kv1.1/KCNA1 and Kv1.2/KCNA2). Has a neuroprotective effect, since it suppress, at low concentration, the 6-hydroxydopamine-induced neurotoxicity on the locomotive behavior of zebrafish. In vivo, has strong reversible antilocomotor activity. In addition, it is lethal to zebrafish larvae at high doses. The protein is Kunitz-like toxin PcKuz3 of Palythoa caribaeorum (White encrusting zoanthid coral).